We begin with the raw amino-acid sequence, 123 residues long: Large ribosomal subunit protein bL12 (123 aa).

It belongs to the bacterial ribosomal protein bL12 family. In terms of assembly, homodimer. Part of the ribosomal stalk of the 50S ribosomal subunit. Forms a multimeric L10(L12)X complex, where L10 forms an elongated spine to which 2 to 4 L12 dimers bind in a sequential fashion. Binds GTP-bound translation factors.

In terms of biological role, forms part of the ribosomal stalk which helps the ribosome interact with GTP-bound translation factors. Is thus essential for accurate translation. This chain is Large ribosomal subunit protein bL12, found in Albidiferax ferrireducens (strain ATCC BAA-621 / DSM 15236 / T118) (Rhodoferax ferrireducens).